The primary structure comprises 200 residues: Vacuolar iron transporter homolog 1 (200 aa).

Residues 1 to 34 (MESHNVSNSLNLDMEMDQEKAFDYSKRAQWLRAA) are Cytoplasmic-facing. A helical transmembrane segment spans residues 35-55 (VLGANDGLVSTASLMMGVGAV). The Vacuolar segment spans residues 56-62 (KQDVKVM). The helical transmembrane segment at 63–83 (ILSGFAGLVAGACSMAIGEFV) threads the bilayer. At 84 to 116 (SVYSQYDIEVAQMKRENGGQVEKEKLPSPMQAA) the chain is on the cytoplasmic side. Residues 117 to 137 (AASALAFSLGAIVPLMAAAFV) form a helical membrane-spanning segment. The Vacuolar portion of the chain corresponds to 138 to 143 (KDYHVR). A helical transmembrane segment spans residues 144-164 (IGAIVAAVTLALVMFGWLGAV). The Cytoplasmic portion of the chain corresponds to 165-176 (LGKAPVFKSSAR). Residues 177 to 197 (VLIGGWLAMAVTFGLTKLIGT) traverse the membrane as a helical segment. The Vacuolar segment spans residues 198-200 (HSL).

The protein belongs to the CCC1 family. As to expression, expressed in the vascular bundles of the shoot and the stele of the root. Expressed in inflorescences and at lower levels in leaves.

The protein resides in the vacuole membrane. It carries out the reaction Fe(2+)(in) = Fe(2+)(out). Its function is as follows. Vacuolar iron transporter involved in the transfer of iron ions from the cytosol to the vacuole for intracellular iron storage. Involved in regulation of cellular iron homeostasis. Vacuolar iron storage is required for seed embryo and seedling development. In Arabidopsis thaliana (Mouse-ear cress), this protein is Vacuolar iron transporter homolog 1.